A 308-amino-acid polypeptide reads, in one-letter code: Taste receptor type 2 member 107 (308 aa).

The Extracellular portion of the chain corresponds to 1–7; the sequence is MLNSAEG. The helical transmembrane segment at 8 to 28 threads the bilayer; the sequence is ILLCVVTSEAVLGVLGDTYIA. Topologically, residues 29-43 are cytoplasmic; sequence LFNCMDYAKNKKLSK. The helical transmembrane segment at 44-64 threads the bilayer; that stretch reads IGFILIGLAISRIGVVWIIIL. The Extracellular segment spans residues 65 to 87; it reads QGYIQVFFPHMLTSGNITEYITY. A glycan (N-linked (GlcNAc...) asparagine) is linked at N80. A helical membrane pass occupies residues 88 to 108; the sequence is IWVFLNHLSVWFVTNLNILYF. Residues 109 to 125 are Cytoplasmic-facing; the sequence is LKIANFSNSVFLWLKRR. The helical transmembrane segment at 126–146 threads the bilayer; it reads VNAVFIFLSGCLLTSWLLCFP. At 147 to 180 the chain is on the extracellular side; sequence QMTKILQNSKMHQRNTSWVHQRKNYFLINQSVTN. N-linked (GlcNAc...) asparagine glycans are attached at residues N161 and N175. The helical transmembrane segment at 181-201 threads the bilayer; that stretch reads LGIFFFIIVSLITCFLLIVFL. Over 202–232 the chain is Cytoplasmic; it reads WRHVRQMHSDVSGFRDHSTKVHVKAMKFLIS. A helical membrane pass occupies residues 233 to 253; the sequence is FMVFFILHFVGLSIEVLCFIL. The Extracellular segment spans residues 254-258; that stretch reads PQNKL. A helical membrane pass occupies residues 259–279; the sequence is LFITGLTATCLYPCGHSIIVI. Residues 280-308 lie on the Cytoplasmic side of the membrane; sequence LGNKQLKQASLKALQQLKCCETKGNFRVK.

Belongs to the G-protein coupled receptor T2R family.

The protein resides in the membrane. Its function is as follows. Putative taste receptor which may play a role in the perception of bitterness. In Mus musculus (Mouse), this protein is Taste receptor type 2 member 107.